A 348-amino-acid chain; its full sequence is MSLAEINKNEVDIVIGALNADLTQFLTSWRPFFSGFHLIVVKDPELKEELNIPEGFDVDVYSKTDMEKVVGASNSTMFSGYSCRYFGYLVSKKKYIVSIDDDCVPAKDPKGFLVDAVTQHVINLENPATPLFFNTLYDPYCEGADFVRGYPFSLRSGVPCAASCGLWLNLADLDAPTQALKTEKRNTAYVDAVMTVPAKAMLPISGINIAFNRELVGPALVPALRLAGEGKVRWETLEDVWCGMCLKHISDHLGYGVKTGLPYVWRNERGDAVESLRKKWEGMKLMEKSVPFFDSLKLPETALKVEDCVIELAKAVKEQLGSDDPAFTQAADAMVKWVQLWNSVNSSA.

A DXD motif motif is present at residues 100–102 (DDD). Arginine 148 carries N-linked (Glc...) arginine glycosylation.

It belongs to the RGP family. Heteromers with RGP1 and RGP2. Mn(2+) serves as cofactor. Mg(2+) is required as a cofactor. Post-translationally, reversibly glycosylated in vitro by UDP-glucose, UDP-xylose and UDP-galactose, but not UDP-mannose. As to expression, widely expressed at low levels.

It is found in the cytoplasm. The protein localises to the cytosol. The protein resides in the golgi apparatus. The enzyme catalyses UDP-beta-L-arabinofuranose = UDP-beta-L-arabinopyranose. Probable UDP-L-arabinose mutase involved in the biosynthesis of cell wall non-cellulosic polysaccharides. In Arabidopsis thaliana (Mouse-ear cress), this protein is Probable UDP-arabinopyranose mutase 5.